Here is a 395-residue protein sequence, read N- to C-terminus: MAKLGTPLSPSATRVLLLGSGELGKEVAIELQRLGVEVIAADRYADAPAMQVAHRSHVIDMLDAMALRALIAQEQPHLVVPEIEAIHTETLVQLEQEQGLRVIPTARAARLTMDREGIRRLAAETLGLPTSPYRFVDTEAEYRAAVAAIGLPCVVKPVMSSSGKGQSTLRSEAEIAPAWEYAQTGGRAGAGRCIVEGFIDFDYEITLLTVRHAGGTSFCAPIGHLQKDGDYRESWQPQPMSSAALARAEEISRAITDDLGGWGLFGVELFVKGDEVWFSEVSPRPHDTGLVTLVSQELSEFALHARAILGLPIPVIRQSGPSASCALLAHGEGVPYFNNVAAALQVPDTAVRLFGKPSVHGHRRVGVTLARAETIDEARAIARDAAEAIGVELRP.

N(1)-(5-phospho-beta-D-ribosyl)glycinamide-binding positions include 22 to 23 and glutamate 82; that span reads EL. ATP contacts are provided by residues arginine 115, lysine 156, 161–166, 196–199, and glutamate 204; these read SSGKGQ and EGFI. Residues 120–309 form the ATP-grasp domain; it reads RLAAETLGLP…EFALHARAIL (190 aa). The Mg(2+) site is built by glutamate 268 and glutamate 280. Residues aspartate 287, lysine 356, and 363–364 contribute to the N(1)-(5-phospho-beta-D-ribosyl)glycinamide site; that span reads RR.

Belongs to the PurK/PurT family. In terms of assembly, homodimer.

The catalysed reaction is N(1)-(5-phospho-beta-D-ribosyl)glycinamide + formate + ATP = N(2)-formyl-N(1)-(5-phospho-beta-D-ribosyl)glycinamide + ADP + phosphate + H(+). Its pathway is purine metabolism; IMP biosynthesis via de novo pathway; N(2)-formyl-N(1)-(5-phospho-D-ribosyl)glycinamide from N(1)-(5-phospho-D-ribosyl)glycinamide (formate route): step 1/1. Involved in the de novo purine biosynthesis. Catalyzes the transfer of formate to 5-phospho-ribosyl-glycinamide (GAR), producing 5-phospho-ribosyl-N-formylglycinamide (FGAR). Formate is provided by PurU via hydrolysis of 10-formyl-tetrahydrofolate. The chain is Formate-dependent phosphoribosylglycinamide formyltransferase from Stenotrophomonas maltophilia (strain K279a).